The primary structure comprises 226 residues: V-type proton ATPase subunit E (226 aa).

Belongs to the V-ATPase E subunit family. In terms of assembly, V-ATPase is a heteromultimeric enzyme composed of a peripheral catalytic V1 complex (components A to H) attached to an integral membrane V0 proton pore complex (components: a, c, c', c'', d, e, f and VOA1).

The protein resides in the vacuole membrane. In terms of biological role, subunit of the V1 complex of vacuolar(H+)-ATPase (V-ATPase), a multisubunit enzyme composed of a peripheral complex (V1) that hydrolyzes ATP and a membrane integral complex (V0) that translocates protons. V-ATPase is responsible for acidifying and maintaining the pH of intracellular compartments. This chain is V-type proton ATPase subunit E (VMA4), found in Candida albicans (Yeast).